Here is a 116-residue protein sequence, read N- to C-terminus: MAGVLKKTTGLVGLAVCNTPHERLRILYTKILDVLEEIPKNAAYRKYTEQITNEKLAMVKAEPDVKKLEDQLQGGQLEEVILQAEHELNLARKMREWKLWEPLVEEPPADQWKWPI.

A2 carries the post-translational modification N-acetylalanine. 3 positions are modified to N6-acetyllysine: K30, K46, and K60. The residue at position 98 (K98) is an N6-acetyllysine; alternate. The residue at position 98 (K98) is an N6-succinyllysine; alternate.

Belongs to the complex I NDUFA5 subunit family. As to quaternary structure, complex I is composed of 45 different subunits.

It localises to the mitochondrion inner membrane. In terms of biological role, accessory subunit of the mitochondrial membrane respiratory chain NADH dehydrogenase (Complex I), that is believed not to be involved in catalysis. Complex I functions in the transfer of electrons from NADH to the respiratory chain. The immediate electron acceptor for the enzyme is believed to be ubiquinone. The chain is NADH dehydrogenase [ubiquinone] 1 alpha subcomplex subunit 5 (NDUFA5) from Gorilla gorilla gorilla (Western lowland gorilla).